Here is an 868-residue protein sequence, read N- to C-terminus: Rifampicin phosphotransferase (868 aa).

Positions 5–317 are ATP-binding; sequence TERYVLDLQE…FHIVQSRPIT (313 aa). Lys-26, Arg-120, Gly-135, Thr-139, Gln-186, Glu-300, Gln-312, and Arg-314 together coordinate ATP. Residues 330-755 are rifampicin-binding; the sequence is NHVYVSVGHQ…TSDGEALTGA (426 aa). The disordered stretch occupies residues 410-430; the sequence is FVPSLPDAPPAGPRAGAAPEP. Residues 768–866 are swivel phosphohistidine; it reads GLPVSTGTVE…VHGTDGYIEI (99 aa). Catalysis depends on His-826, which acts as the Tele-phosphohistidine intermediate.

It belongs to the rifampicin phosphotransferase family.

The catalysed reaction is rifampicin + ATP + H2O = 21-phosphorifampicin + AMP + phosphate + 2 H(+). Functionally, catalyzes the phosphorylation of rifampicin, also known as rifampin (RIF), leading to its inactivation. Confers high level resistance to a variety of clinically used rifamycin antibiotics. Does not show phosphoenolpyruvate (PEP) synthase activity. The sequence is that of Rifampicin phosphotransferase from Streptomyces sviceus (strain ATCC 29083 / DSM 924 / JCM 4929 / NBRC 13980 / NCIMB 11184 / NRRL 5439 / UC 5370).